A 602-amino-acid polypeptide reads, in one-letter code: Basic-leucine zipper transcription factor B (602 aa).

Over residues 1–10 (MNQFYQSTTG) the composition is skewed to polar residues. Residues 1–128 (MNQFYQSTTG…NRVNQNLASR (128 aa)) form a disordered region. Composition is skewed to low complexity over residues 11–54 (GQQN…TSTS) and 66–102 (QQQI…YNGD). The stretch at 58-94 (KNKDNQSKQQQIQQQQIQQQQQQQQQQQQQIQQQSVD) forms a coiled coil. Residues 113 to 176 (ENKKNRNRVN…GVEIMKPDPA (64 aa)) form the bZIP domain. Positions 115-135 (KKNRNRVNQNLASRNYRQRKK) are basic motif. The interval 138–145 (IKEIEEKL) is leucine-zipper. Disordered stretches follow at residues 328–401 (TNLS…QNNN) and 525–602 (QNQT…PSRQ). Composition is skewed to low complexity over residues 336 to 350 (PNPT…TQST), 358 to 401 (LTLL…QNNN), and 525 to 592 (QNQT…SSPY). Positions 509–552 (TFSQQTQQLQQAQLQLQNQTKQQQQQLQNNNNNNNNNNNNNNSF) form a coiled coil. Residues 593–602 (NHHQQQPSRQ) are compositionally biased toward polar residues.

This sequence belongs to the bZIP family. In terms of assembly, binds DNA as a dimer. Heterodimerizes with dimA; in vitro. Also able to form homodimer; in vitro.

Its subcellular location is the nucleus. Its function is as follows. Transcriptional regulator involved in DIF-1 signaling. DIF-1 (Differentiation Inducing Factor-1) is a signal molecule involved in the differentiation of pstO (prestalk-O) cells. May be a direct activator of ecmA. The chain is Basic-leucine zipper transcription factor B (dimB) from Dictyostelium discoideum (Social amoeba).